The sequence spans 269 residues: Surfeit locus protein 4 (269 aa).

5 helical membrane passes run 64-84, 92-112, 179-199, 203-223, and 239-259; these read LLAS…CILV, YACF…SILW, FFSI…AIGF, LAAL…NAFW, and FFQT…GPGG. The Di-lysine motif motif lies at 266–269; the sequence is KKEW.

This sequence belongs to the SURF4 family. As to quaternary structure, found in a complex composed at least of SURF4, TMED2 and TMED10. May interact with LMAN1. Interacts with ZFYVE27 and with KIF5A in a ZFYVE27-dependent manner. Interacts with STING1. Interacts with SAR1B. Interacts with TMEM41B.

Its subcellular location is the endoplasmic reticulum membrane. The protein resides in the endoplasmic reticulum-Golgi intermediate compartment membrane. It is found in the golgi apparatus membrane. Functionally, endoplasmic reticulum cargo receptor that mediates the export of lipoproteins by recruiting cargos into COPII vesicles to facilitate their secretion. Acts as a cargo receptor for lipoproteins bearing both APOB and APOA1, thereby regulating lipoprotein delivery and the maintenance of lipid homeostasis. Synergizes with the GTPase SAR1B to mediate transport of circulating lipoproteins. Promotes the secretion of PCSK9. Also mediates the efficient secretion of erythropoietin (EPO). May also play a role in the maintenance of the architecture of the endoplasmic reticulum-Golgi intermediate compartment and of the Golgi. The protein is Surfeit locus protein 4 of Bos taurus (Bovine).